The chain runs to 661 residues: UvrABC system protein B (661 aa).

Positions 25-182 constitute a Helicase ATP-binding domain; the sequence is KGLNNKKRSQ…NDLVNLQYER (158 aa). An ATP-binding site is contributed by 38–45; sequence GITGSGKT. The short motif at 91 to 114 is the Beta-hairpin element; it reads YYDYYQPEAYIPKTDVFIEKDSSI. The 163-residue stretch at 430 to 592 folds into the Helicase C-terminal domain; sequence QVEDLVGEIQ…IIPKTINRTI (163 aa). Residues 621 to 656 form the UVR domain; it reads KAHIDKLRKEMLKAASNLEFEQAAKLRDQLKTLEEA.

This sequence belongs to the UvrB family. In terms of assembly, forms a heterotetramer with UvrA during the search for lesions. Interacts with UvrC in an incision complex.

The protein localises to the cytoplasm. Its function is as follows. The UvrABC repair system catalyzes the recognition and processing of DNA lesions. A damage recognition complex composed of 2 UvrA and 2 UvrB subunits scans DNA for abnormalities. Upon binding of the UvrA(2)B(2) complex to a putative damaged site, the DNA wraps around one UvrB monomer. DNA wrap is dependent on ATP binding by UvrB and probably causes local melting of the DNA helix, facilitating insertion of UvrB beta-hairpin between the DNA strands. Then UvrB probes one DNA strand for the presence of a lesion. If a lesion is found the UvrA subunits dissociate and the UvrB-DNA preincision complex is formed. This complex is subsequently bound by UvrC and the second UvrB is released. If no lesion is found, the DNA wraps around the other UvrB subunit that will check the other stand for damage. The sequence is that of UvrABC system protein B from Rickettsia bellii (strain RML369-C).